A 780-amino-acid polypeptide reads, in one-letter code: Protein SEY1 (780 aa).

Residues 1–680 (MDSKEEAIQL…KRSMIKTTTH (680 aa)) are Cytoplasmic-facing. A GB1/RHD3-type G domain is found at 35–265 (GVNYHVISVF…NEDYYFKPEY (231 aa)). 45–52 (GSQSSGKS) contributes to the GTP binding site. The stretch at 440-463 (EVKEEVVKRFENDLKETSDKLRVT) forms a coiled coil. A helical membrane pass occupies residues 681-701 (IPLWIYAIIVVLGWNEFMMVI). Residues 702-704 (RNP) are Lumenal-facing. The chain crosses the membrane as a helical span at residues 705–725 (LFVTLTILILVSFYFINKFDL). At 726 to 780 (WGPVKSVAQTAAGETIGTIKTKLRDFVLEEHEKTPKIQSEKSNSDSEKVVENEKS) the chain is on the cytoplasmic side. Residues 756-780 (HEKTPKIQSEKSNSDSEKVVENEKS) form a disordered region.

This sequence belongs to the TRAFAC class dynamin-like GTPase superfamily. GB1/RHD3 GTPase family. RHD3 subfamily.

The protein localises to the endoplasmic reticulum membrane. Functionally, cooperates with the reticulon proteins and tubule-shaping DP1 family proteins to generate and maintain the structure of the tubular endoplasmic reticulum network. Has GTPase activity, which is required for its function in ER organization. The chain is Protein SEY1 from Vanderwaltozyma polyspora (strain ATCC 22028 / DSM 70294 / BCRC 21397 / CBS 2163 / NBRC 10782 / NRRL Y-8283 / UCD 57-17) (Kluyveromyces polysporus).